The chain runs to 455 residues: Beta-1,4-mannosyltransferase bre-3 (455 aa).

This sequence belongs to the glycosyltransferase 2 family.

It localises to the cytoplasm. The protein operates within protein modification; protein glycosylation. In terms of biological role, glycosyltransferase with a proposed role in glycosphingolipid biosynthesis. Involved in susceptibility to pore-forming crystal toxins in conjunction with bre-1, bre-2 and bre-4. Involved in resistance to the nematotoxic C.cinerea galectin Cgl2. Has a role in determining brood size. The chain is Beta-1,4-mannosyltransferase bre-3 from Caenorhabditis briggsae.